The sequence spans 262 residues: Glutamate racemase (262 aa).

Residues 5–6 and 37–38 contribute to the substrate site; these read DS and YG. The Proton donor/acceptor role is filled by C69. Substrate is bound at residue 70–71; that stretch reads NT. C181 acts as the Proton donor/acceptor in catalysis. 182–183 serves as a coordination point for substrate; that stretch reads TH.

The protein belongs to the aspartate/glutamate racemases family.

The catalysed reaction is L-glutamate = D-glutamate. The protein operates within cell wall biogenesis; peptidoglycan biosynthesis. Functionally, provides the (R)-glutamate required for cell wall biosynthesis. The protein is Glutamate racemase of Buchnera aphidicola subsp. Acyrthosiphon pisum (strain 5A).